The chain runs to 375 residues: Quinolinate synthase (375 aa).

Positions 47 and 64 each coordinate iminosuccinate. Cysteine 110 contributes to the [4Fe-4S] cluster binding site. Iminosuccinate-binding positions include 144-146 (YVN) and serine 165. Cysteine 235 is a binding site for [4Fe-4S] cluster. Residues 261–263 (HPE) and threonine 278 each bind iminosuccinate. Cysteine 325 serves as a coordination point for [4Fe-4S] cluster.

It belongs to the quinolinate synthase family. Type 3 subfamily. [4Fe-4S] cluster serves as cofactor.

It localises to the cytoplasm. It carries out the reaction iminosuccinate + dihydroxyacetone phosphate = quinolinate + phosphate + 2 H2O + H(+). It participates in cofactor biosynthesis; NAD(+) biosynthesis; quinolinate from iminoaspartate: step 1/1. In terms of biological role, catalyzes the condensation of iminoaspartate with dihydroxyacetone phosphate to form quinolinate. This Herpetosiphon aurantiacus (strain ATCC 23779 / DSM 785 / 114-95) protein is Quinolinate synthase.